Consider the following 551-residue polypeptide: Chaperonin GroEL (551 aa).

ATP-binding positions include 30-33 (TLGP), Lys51, 87-91 (DGTTT), Gly415, and Asp496.

It belongs to the chaperonin (HSP60) family. Forms a cylinder of 14 subunits composed of two heptameric rings stacked back-to-back. Interacts with the co-chaperonin GroES.

Its subcellular location is the cytoplasm. It catalyses the reaction ATP + H2O + a folded polypeptide = ADP + phosphate + an unfolded polypeptide.. In terms of biological role, together with its co-chaperonin GroES, plays an essential role in assisting protein folding. The GroEL-GroES system forms a nano-cage that allows encapsulation of the non-native substrate proteins and provides a physical environment optimized to promote and accelerate protein folding. This Maricaulis maris (strain MCS10) (Caulobacter maris) protein is Chaperonin GroEL.